A 186-amino-acid polypeptide reads, in one-letter code: Elongation factor P (186 aa).

This sequence belongs to the elongation factor P family.

It localises to the cytoplasm. Its pathway is protein biosynthesis; polypeptide chain elongation. In terms of biological role, involved in peptide bond synthesis. Stimulates efficient translation and peptide-bond synthesis on native or reconstituted 70S ribosomes in vitro. Probably functions indirectly by altering the affinity of the ribosome for aminoacyl-tRNA, thus increasing their reactivity as acceptors for peptidyl transferase. This is Elongation factor P from Elusimicrobium minutum (strain Pei191).